The primary structure comprises 155 residues: Ribosome maturation factor RimP (155 aa).

The protein belongs to the RimP family.

It is found in the cytoplasm. Its function is as follows. Required for maturation of 30S ribosomal subunits. This Prochlorococcus marinus (strain MIT 9301) protein is Ribosome maturation factor RimP.